The chain runs to 434 residues: Urokinase-type plasminogen activator (434 aa).

A signal peptide spans 1-20 (MKLIIFLTVTLCTLVTGLDS). One can recognise an EGF-like domain in the interval 36–72 (QHRECQCLNGGTCITYRFFSQIKRCLCPEGYGGLHCE). Cystine bridges form between Cys40–Cys48, Cys42–Cys60, Cys62–Cys71, Cys79–Cys158, Cys96–Cys139, Cys128–Cys152, Cys162–Cys296, Cys202–Cys218, Cys210–Cys285, Cys310–Cys379, Cys342–Cys358, and Cys369–Cys397. The 80-residue stretch at 79–158 (CYSGNGEDYR…ETPCSTIEKC (80 aa)) folds into the Kringle domain. The connecting peptide stretch occupies residues 159–172 (ERTCGQRSFSKYFK). One can recognise a Peptidase S1 domain in the interval 173–421 (IVGGSQAEVE…YLNWIDSNMN (249 aa)). His217 (charge relay system) is an active-site residue. Asn228 is a glycosylation site (N-linked (GlcNAc...) asparagine). Residue Asp272 is the Charge relay system of the active site. The active-site Charge relay system is the Ser373.

The protein belongs to the peptidase S1 family.

It localises to the secreted. It carries out the reaction Specific cleavage of Arg-|-Val bond in plasminogen to form plasmin.. In terms of biological role, specifically cleaves the zymogen plasminogen to form the active enzyme plasmin. The polypeptide is Urokinase-type plasminogen activator (PLAU) (Gallus gallus (Chicken)).